The chain runs to 359 residues: RNA 3'-terminal phosphate cyclase (359 aa).

ATP contacts are provided by residues Gln-100 and 291–294 (HASD). His-317 (tele-AMP-histidine intermediate) is an active-site residue.

The protein belongs to the RNA 3'-terminal cyclase family. Type 1 subfamily.

The protein localises to the cytoplasm. The enzyme catalyses a 3'-end 3'-phospho-ribonucleotide-RNA + ATP = a 3'-end 2',3'-cyclophospho-ribonucleotide-RNA + AMP + diphosphate. Functionally, catalyzes the conversion of 3'-phosphate to a 2',3'-cyclic phosphodiester at the end of RNA. The mechanism of action of the enzyme occurs in 3 steps: (A) adenylation of the enzyme by ATP; (B) transfer of adenylate to an RNA-N3'P to produce RNA-N3'PP5'A; (C) and attack of the adjacent 2'-hydroxyl on the 3'-phosphorus in the diester linkage to produce the cyclic end product. The biological role of this enzyme is unknown but it is likely to function in some aspects of cellular RNA processing. This Hyperthermus butylicus (strain DSM 5456 / JCM 9403 / PLM1-5) protein is RNA 3'-terminal phosphate cyclase.